We begin with the raw amino-acid sequence, 401 residues long: Protein-glutamate methylesterase/protein-glutamine glutaminase (401 aa).

The region spanning 16-134 is the Response regulatory domain; that stretch reads RVLVIDDSAV…LAGAEEFRRD (119 aa). The residue at position 67 (Asp-67) is a 4-aspartylphosphate. The segment at 146-208 is disordered; it reads PIPPVPTQRD…PQGRGTPRNT (63 aa). Composition is skewed to low complexity over residues 166–176 and 185–199; these read AAPGAPVARSI and SAPAKKAFAPVAQPP. The region spanning 205–400 is the CheB-type methylesterase domain; it reads PRNTARPEII…PGIVRRAKGG (196 aa). Catalysis depends on residues Ser-219, His-246, and Asp-342.

Belongs to the CheB family. In terms of processing, phosphorylated by CheA. Phosphorylation of the N-terminal regulatory domain activates the methylesterase activity.

Its subcellular location is the cytoplasm. It carries out the reaction [protein]-L-glutamate 5-O-methyl ester + H2O = L-glutamyl-[protein] + methanol + H(+). It catalyses the reaction L-glutaminyl-[protein] + H2O = L-glutamyl-[protein] + NH4(+). In terms of biological role, involved in chemotaxis. Part of a chemotaxis signal transduction system that modulates chemotaxis in response to various stimuli. Catalyzes the demethylation of specific methylglutamate residues introduced into the chemoreceptors (methyl-accepting chemotaxis proteins or MCP) by CheR. Also mediates the irreversible deamidation of specific glutamine residues to glutamic acid. This chain is Protein-glutamate methylesterase/protein-glutamine glutaminase, found in Maricaulis maris (strain MCS10) (Caulobacter maris).